Consider the following 185-residue polypeptide: Protein GrpE (185 aa).

Residues 1–40 (MSEEKKDEILEQETVETKEEIKTEEAEQKTESLEEKVARL) are disordered.

Belongs to the GrpE family. Homodimer.

Its subcellular location is the cytoplasm. Functionally, participates actively in the response to hyperosmotic and heat shock by preventing the aggregation of stress-denatured proteins, in association with DnaK and GrpE. It is the nucleotide exchange factor for DnaK and may function as a thermosensor. Unfolded proteins bind initially to DnaJ; upon interaction with the DnaJ-bound protein, DnaK hydrolyzes its bound ATP, resulting in the formation of a stable complex. GrpE releases ADP from DnaK; ATP binding to DnaK triggers the release of the substrate protein, thus completing the reaction cycle. Several rounds of ATP-dependent interactions between DnaJ, DnaK and GrpE are required for fully efficient folding. The polypeptide is Protein GrpE (Aliarcobacter butzleri (strain RM4018) (Arcobacter butzleri)).